We begin with the raw amino-acid sequence, 533 residues long: Hydroxylamine reductase (533 aa).

4 residues coordinate [4Fe-4S] cluster: Cys-3, Cys-6, Cys-15, and Cys-21. Hybrid [4Fe-2O-2S] cluster is bound by residues His-234, Glu-258, Cys-302, Cys-389, Cys-417, Cys-442, Glu-476, and Lys-478. Cys-389 is subject to Cysteine persulfide.

Belongs to the HCP family. It depends on [4Fe-4S] cluster as a cofactor. Hybrid [4Fe-2O-2S] cluster serves as cofactor.

The protein localises to the cytoplasm. The catalysed reaction is A + NH4(+) + H2O = hydroxylamine + AH2 + H(+). Functionally, catalyzes the reduction of hydroxylamine to form NH(3) and H(2)O. The chain is Hydroxylamine reductase from Maridesulfovibrio salexigens (strain ATCC 14822 / DSM 2638 / NCIMB 8403 / VKM B-1763) (Desulfovibrio salexigens).